A 229-amino-acid chain; its full sequence is Ribonuclease 3 (229 aa).

An RNase III domain is found at 2-130 (FEKLQDVLCY…ILGAIFLDGG (129 aa)). Residue E43 participates in Mg(2+) binding. Residue D47 is part of the active site. D116 and E119 together coordinate Mg(2+). The active site involves E119. A DRBM domain is found at 157-226 (DAKSTLQELT…AGLALELLEG (70 aa)).

This sequence belongs to the ribonuclease III family. In terms of assembly, homodimer. The cofactor is Mg(2+).

It localises to the cytoplasm. The enzyme catalyses Endonucleolytic cleavage to 5'-phosphomonoester.. Its function is as follows. Digests double-stranded RNA. Involved in the processing of primary rRNA transcript to yield the immediate precursors to the large and small rRNAs (23S and 16S). Processes some mRNAs, and tRNAs when they are encoded in the rRNA operon. Processes pre-crRNA and tracrRNA of type II CRISPR loci if present in the organism. The chain is Ribonuclease 3 from Oleidesulfovibrio alaskensis (strain ATCC BAA-1058 / DSM 17464 / G20) (Desulfovibrio alaskensis).